The chain runs to 114 residues: Protein ORF3 (114 aa).

2 hydrophobic regions span residues 6–22 (CALGLFCCCSSCFCLCC) and 33–53 (AVVGGAAAVPAVVSGVTGLIL). The tract at residues 28–68 (VSRLAAVVGGAAAVPAVVSGVTGLILSPSQSPIFIQPTPSP) is interaction with host HPX. The interval 48–72 (VTGLILSPSQSPIFIQPTPSPPMSP) is interaction with the capsid protein. Ser71 bears the Phosphoserine; by host mark. The homodimerization, and interaction with host AMBP/bikunin stretch occupies residues 72 to 114 (PLRPGLDLVFANPPDHSAPLGVTRPSAPPLPHVVDLPQLGPRR). Residues 91 to 114 (LGVTRPSAPPLPHVVDLPQLGPRR) are disordered. The segment at 95 to 104 (RPSAPPLPHV) is interaction with host SRC, HCK, FYN, PIK3R3 and GRB2. The PTAP/PSAP motif signature appears at 96–99 (PSAP).

It belongs to the hepevirus ORF3 protein family. Forms homooligomers. Interacts with host SRC, HCK, FYN, PIK3R3 and GRB2 (via SH3 domain); binding does not activate the kinases. Interacts with host AMBP/bikunin and AMBP/alpha-1-microglobulin peptides. Interacts with host HPX/hemopexin. Interacts (when phosphorylated) with capsid protein ORF2. Interacts with host TSG101; this interaction plays a role in viral release from the host cell. Interacts with host SIRPA; this interaction down-regulates the phosphorylation of host IRF3. Palmitoylated in the N-terminus.

Its subcellular location is the host endoplasmic reticulum membrane. It localises to the host cytoplasm. The protein localises to the host cytoskeleton. The protein resides in the virion. It is found in the host cell membrane. Small multifunctional phosphoprotein involved in virion morphogenesis, egress and counteracting host innate immunity. Plays critical roles in the final steps of viral release by interacting with host TSG101, a member of the vacuolar protein-sorting pathway and using other cellular host proteins involved in vesicle formation pathway. Also acts as a viroporin and forms ion conductive pores allowing viral particle release. Impairs the generation of type I interferon by down-regulating host TLR3 and TLR7 as well as their downstream signaling pathways. Down-regulates the phosphorylation of host IRF3 via the interaction with host SIRP-alpha, thereby inhibiting IFN-I expression. Interacts with host microtubules. This chain is Protein ORF3, found in Hepatitis E virus genotype 1 (isolate Human/Burma) (HEV-1).